We begin with the raw amino-acid sequence, 194 residues long: dCTP deaminase (194 aa).

DCTP is bound by residues 110–115, Asp-128, 136–138, Tyr-171, Lys-178, and Gln-182; these read RSSLAR and VLE. Catalysis depends on Glu-138, which acts as the Proton donor/acceptor.

Belongs to the dCTP deaminase family. Homotrimer.

It catalyses the reaction dCTP + H2O + H(+) = dUTP + NH4(+). Its pathway is pyrimidine metabolism; dUMP biosynthesis; dUMP from dCTP (dUTP route): step 1/2. Its function is as follows. Catalyzes the deamination of dCTP to dUTP. The polypeptide is dCTP deaminase (Glaesserella parasuis serovar 5 (strain SH0165) (Haemophilus parasuis)).